The primary structure comprises 112 residues: Virion protein 6 (112 aa).

The protein localises to the virion. This is Virion protein 6 from Enterococcus phage phiEF24C (Enterococcus bacteriophage phi-EF24C).